The primary structure comprises 636 residues: 1-deoxy-D-xylulose-5-phosphate synthase (636 aa).

Thiamine diphosphate contacts are provided by residues H72 and G113–A115. D144 contributes to the Mg(2+) binding site. Thiamine diphosphate contacts are provided by residues G145–A146, N174, Y287, and E370. N174 contributes to the Mg(2+) binding site.

The protein belongs to the transketolase family. DXPS subfamily. Homodimer. The cofactor is Mg(2+). Requires thiamine diphosphate as cofactor.

It catalyses the reaction D-glyceraldehyde 3-phosphate + pyruvate + H(+) = 1-deoxy-D-xylulose 5-phosphate + CO2. The protein operates within metabolic intermediate biosynthesis; 1-deoxy-D-xylulose 5-phosphate biosynthesis; 1-deoxy-D-xylulose 5-phosphate from D-glyceraldehyde 3-phosphate and pyruvate: step 1/1. Functionally, catalyzes the acyloin condensation reaction between C atoms 2 and 3 of pyruvate and glyceraldehyde 3-phosphate to yield 1-deoxy-D-xylulose-5-phosphate (DXP). The protein is 1-deoxy-D-xylulose-5-phosphate synthase of Rippkaea orientalis (strain PCC 8801 / RF-1) (Cyanothece sp. (strain PCC 8801)).